Consider the following 162-residue polypeptide: Cytochrome c-type biogenesis protein CcmE (162 aa).

The Cytoplasmic portion of the chain corresponds to Met1–Arg8. The chain crosses the membrane as a helical; Signal-anchor for type II membrane protein span at residues Leu9–Ala29. Topologically, residues Leu30–Lys162 are periplasmic. His131 and Tyr135 together coordinate heme. The interval Glu142–Lys162 is disordered. Residues Tyr153 to Lys162 show a composition bias toward polar residues.

This sequence belongs to the CcmE/CycJ family.

The protein resides in the cell inner membrane. Heme chaperone required for the biogenesis of c-type cytochromes. Transiently binds heme delivered by CcmC and transfers the heme to apo-cytochromes in a process facilitated by CcmF and CcmH. The protein is Cytochrome c-type biogenesis protein CcmE of Shewanella baltica (strain OS223).